We begin with the raw amino-acid sequence, 504 residues long: Probable cytosol aminopeptidase (504 aa).

Residues Lys276 and Asp281 each coordinate Mn(2+). Lys288 is a catalytic residue. 3 residues coordinate Mn(2+): Asp299, Asp358, and Glu360. Residue Arg362 is part of the active site.

It belongs to the peptidase M17 family. The cofactor is Mn(2+).

Its subcellular location is the cytoplasm. The catalysed reaction is Release of an N-terminal amino acid, Xaa-|-Yaa-, in which Xaa is preferably Leu, but may be other amino acids including Pro although not Arg or Lys, and Yaa may be Pro. Amino acid amides and methyl esters are also readily hydrolyzed, but rates on arylamides are exceedingly low.. The enzyme catalyses Release of an N-terminal amino acid, preferentially leucine, but not glutamic or aspartic acids.. Presumably involved in the processing and regular turnover of intracellular proteins. Catalyzes the removal of unsubstituted N-terminal amino acids from various peptides. The sequence is that of Probable cytosol aminopeptidase from Bordetella avium (strain 197N).